The following is a 118-amino-acid chain: Small ribosomal subunit protein bS6 (118 aa).

Belongs to the bacterial ribosomal protein bS6 family.

Its function is as follows. Binds together with bS18 to 16S ribosomal RNA. This Parabacteroides distasonis (strain ATCC 8503 / DSM 20701 / CIP 104284 / JCM 5825 / NCTC 11152) protein is Small ribosomal subunit protein bS6.